The chain runs to 342 residues: Dihydroorotate dehydrogenase (quinone) (342 aa).

FMN-binding positions include 61–65 and T85; that span reads AGLDK. K65 serves as a coordination point for substrate. 110–114 provides a ligand contact to substrate; that stretch reads NRMGF. The FMN site is built by N138 and N171. Residue N171 participates in substrate binding. Catalysis depends on S174, which acts as the Nucleophile. N176 is a substrate binding site. FMN contacts are provided by K216 and T244. Residue 245–246 participates in substrate binding; it reads NT. FMN contacts are provided by residues G267, G296, and 317–318; that span reads YS.

Belongs to the dihydroorotate dehydrogenase family. Type 2 subfamily. Monomer. Requires FMN as cofactor.

The protein resides in the cell membrane. The enzyme catalyses (S)-dihydroorotate + a quinone = orotate + a quinol. It participates in pyrimidine metabolism; UMP biosynthesis via de novo pathway; orotate from (S)-dihydroorotate (quinone route): step 1/1. Catalyzes the conversion of dihydroorotate to orotate with quinone as electron acceptor. The protein is Dihydroorotate dehydrogenase (quinone) of Pseudomonas aeruginosa (strain LESB58).